Here is a 130-residue protein sequence, read N- to C-terminus: MRRYLLPRQLRIRRRVEFTACYERGRRYHTEHFLVFVLPRACPGLRARTGMAVSRKVGKAVVRNRVKRLLREFYRLHREELPVEADIVTVAKKHAGEAALDYARVAAELLPLLRRMARHLPGSSALDGLP.

This sequence belongs to the RnpA family. In terms of assembly, consists of a catalytic RNA component (M1 or rnpB) and a protein subunit.

It carries out the reaction Endonucleolytic cleavage of RNA, removing 5'-extranucleotides from tRNA precursor.. Functionally, RNaseP catalyzes the removal of the 5'-leader sequence from pre-tRNA to produce the mature 5'-terminus. It can also cleave other RNA substrates such as 4.5S RNA. The protein component plays an auxiliary but essential role in vivo by binding to the 5'-leader sequence and broadening the substrate specificity of the ribozyme. In Desulfovibrio desulfuricans (strain ATCC 27774 / DSM 6949 / MB), this protein is Ribonuclease P protein component.